A 307-amino-acid polypeptide reads, in one-letter code: Aspartate carbamoyltransferase catalytic subunit (307 aa).

The carbamoyl phosphate site is built by Arg-56 and Thr-57. Lys-84 is an L-aspartate binding site. Residues Arg-106, His-136, and Gln-139 each coordinate carbamoyl phosphate. L-aspartate contacts are provided by Arg-169 and Arg-221. Residues Ala-262 and Pro-263 each contribute to the carbamoyl phosphate site.

Belongs to the aspartate/ornithine carbamoyltransferase superfamily. ATCase family. In terms of assembly, heterododecamer (2C3:3R2) of six catalytic PyrB chains organized as two trimers (C3), and six regulatory PyrI chains organized as three dimers (R2).

It catalyses the reaction carbamoyl phosphate + L-aspartate = N-carbamoyl-L-aspartate + phosphate + H(+). The protein operates within pyrimidine metabolism; UMP biosynthesis via de novo pathway; (S)-dihydroorotate from bicarbonate: step 2/3. Its function is as follows. Catalyzes the condensation of carbamoyl phosphate and aspartate to form carbamoyl aspartate and inorganic phosphate, the committed step in the de novo pyrimidine nucleotide biosynthesis pathway. This is Aspartate carbamoyltransferase catalytic subunit from Streptococcus pneumoniae (strain 70585).